Here is a 444-residue protein sequence, read N- to C-terminus: MREIVLTQAGQCGNQIGAKFWEVISDEHAIDSAGTYHGDSRLQLERIDVYYNEACGGRYVPRAVLVDLEPGTLDSVRSGPFGQIFRPDSFIFGQCGAGNNWAKGHYTEGAELMESVMDVVRKEAESCDCLQGFQLTHSLGGGTGSGMGTLLLSKIREEYPDRIINTFSILPSPKVSDTVVEPYNATLSVHQLIENADETFCIDNEALYDICSRTLKLPTPTYGDLNHLVSATMSGVTTCLRFPGQLNADLRKLAVNMVPFPRLHFFMPGFAPLTSRGSQQYRALTVAELTQQMFDARNMMAACDPRHGRYLTAAAIFRGRMPMREVDEQMFNIQNKNSSYFADWLPHNVKTAVCDIPPRGLKMSATFIGNNTAIQELFKRVSEQFTAMFRRKAFLHWYTGEGMDEMEFTEAESNMNDLVSEYQQYQDATAEEEEFEEYAEEEEA.

Residues 1 to 4 (MREI) carry the MREI motif motif. GTP-binding residues include Gln11, Glu69, Ser138, Gly142, Thr143, and Gly144. Mg(2+) is bound at residue Glu69. Ser172 is subject to Phosphoserine; by CDK1. Residues Asn204 and Asn226 each contribute to the GTP site. The residue at position 436 (Glu436) is a 5-glutamyl polyglutamate.

Belongs to the tubulin family. Dimer of alpha and beta chains. A typical microtubule is a hollow water-filled tube with an outer diameter of 25 nm and an inner diameter of 15 nM. Alpha-beta heterodimers associate head-to-tail to form protofilaments running lengthwise along the microtubule wall with the beta-tubulin subunit facing the microtubule plus end conferring a structural polarity. Microtubules usually have 13 protofilaments but different protofilament numbers can be found in some organisms and specialized cells. It depends on Mg(2+) as a cofactor. Some glutamate residues at the C-terminus are polyglycylated, resulting in polyglycine chains on the gamma-carboxyl group. Glycylation is mainly limited to tubulin incorporated into axonemes (cilia and flagella) whereas glutamylation is prevalent in neuronal cells, centrioles, axonemes, and the mitotic spindle. Both modifications can coexist on the same protein on adjacent residues, and lowering polyglycylation levels increases polyglutamylation, and reciprocally. Cilia and flagella glycylation is required for their stability and maintenance. Flagella glycylation controls sperm motility. In terms of processing, some glutamate residues at the C-terminus are polyglutamylated, resulting in polyglutamate chains on the gamma-carboxyl group. Polyglutamylation plays a key role in microtubule severing by spastin (SPAST). SPAST preferentially recognizes and acts on microtubules decorated with short polyglutamate tails: severing activity by SPAST increases as the number of glutamates per tubulin rises from one to eight, but decreases beyond this glutamylation threshold. Glutamylation is also involved in cilia motility. Post-translationally, phosphorylated on Ser-172 by CDK1 during the cell cycle, from metaphase to telophase, but not in interphase. This phosphorylation inhibits tubulin incorporation into microtubules.

The protein resides in the cytoplasm. Its subcellular location is the cytoskeleton. It localises to the spindle. In terms of biological role, tubulin is the major constituent of microtubules, a cylinder consisting of laterally associated linear protofilaments composed of alpha- and beta-tubulin heterodimers. Microtubules grow by the addition of GTP-tubulin dimers to the microtubule end, where a stabilizing cap forms. Below the cap, tubulin dimers are in GDP-bound state, owing to GTPase activity of alpha-tubulin. Has a key role in meiotic spindle assembly and oocyte maturation. This Papio hamadryas (Hamadryas baboon) protein is Tubulin beta-8 chain (TUBB8).